The primary structure comprises 427 residues: Glutamate-1-semialdehyde 2,1-aminomutase (427 aa).

At K265 the chain carries N6-(pyridoxal phosphate)lysine.

This sequence belongs to the class-III pyridoxal-phosphate-dependent aminotransferase family. HemL subfamily. Homodimer. Requires pyridoxal 5'-phosphate as cofactor.

The protein resides in the cytoplasm. The enzyme catalyses (S)-4-amino-5-oxopentanoate = 5-aminolevulinate. Its pathway is porphyrin-containing compound metabolism; protoporphyrin-IX biosynthesis; 5-aminolevulinate from L-glutamyl-tRNA(Glu): step 2/2. The sequence is that of Glutamate-1-semialdehyde 2,1-aminomutase from Pseudomonas aeruginosa (strain LESB58).